Reading from the N-terminus, the 68-residue chain is Stage III sporulation protein AC (68 aa).

2 consecutive transmembrane segments (helical) span residues 5–25 (VNVIFQIAGVGIVVAFLHTIL) and 33–53 (YAQWVTLLGFIYILFMVATIV).

Its subcellular location is the cell membrane. In Bacillus subtilis (strain 168), this protein is Stage III sporulation protein AC (spoIIIAC).